The chain runs to 513 residues: Calcium-binding mitochondrial carrier protein SCaMC-2 (513 aa).

The Mitochondrial intermembrane portion of the chain corresponds to 1 to 233 (MARPRSLVSP…EKQTGMWWRH (233 aa)). EF-hand domains follow at residues 55 to 90 (EHET…LGVH), 91 to 124 (RTEL…RDHE), 122 to 157 (DHEK…LGVN), and 158 to 193 (ISEQ…HPAE). Ca(2+) contacts are provided by D68, N70, D72, D79, D104, D106, D108, Q110, and E115. Solcar repeat units follow at residues 228–314 (GMWW…MKRI), 322–407 (LGIH…LKNA), and 419–507 (PGVF…LKLT). Residues 234 to 251 (LVAGGGAGAVSRTCTAPL) form a helical membrane-spanning segment. At 252 to 288 (DRLKVLMQVHASRSNNMSMLGGFTQMIREGGIRSLWR) the chain is on the mitochondrial matrix side. Residues 289 to 308 (GNGINVIKIAPESAIKFMAY) form a helical membrane-spanning segment. Residues 309 to 331 (EQMKRIIGSDQETLGIHERLVAG) lie on the Mitochondrial intermembrane side of the membrane. A helical membrane pass occupies residues 332-345 (SLAGVIAQSSIYPM). Residues 346–381 (EVLKTRMALRKTGQYQGMLDCGKKILLKEGVSAFYK) lie on the Mitochondrial matrix side of the membrane. Residues 382–401 (GYVPNMLGIIPYAGIDLAVY) traverse the membrane as a helical segment. Over 402 to 424 (ETLKNAWLQRYATSSADPGVFVL) the chain is Mitochondrial intermembrane. A helical transmembrane segment spans residues 425 to 442 (LACGTISSTCGQLASYPL). Topologically, residues 443 to 481 (ALVRTRMQAEASVEGAPQMTMSKLFKHIVKTEGAFGLYR) are mitochondrial matrix. The chain crosses the membrane as a helical span at residues 482 to 501 (GLAPNFMKVIPAVSISYVVY). The Mitochondrial intermembrane portion of the chain corresponds to 502–513 (ENLKLTLGVQSR).

The protein belongs to the mitochondrial carrier (TC 2.A.29) family.

The protein resides in the mitochondrion inner membrane. Its function is as follows. Calcium-dependent mitochondrial solute carrier. The polypeptide is Calcium-binding mitochondrial carrier protein SCaMC-2 (slc25a25) (Xenopus tropicalis (Western clawed frog)).